The following is a 183-amino-acid chain: Extracellular superoxide dismutase [Cu-Zn] (183 aa).

Residues 1–32 (MTMLQQILLISVIIGTVHVHEVDCANEVLKAR) form the signal peptide. Asparagine 63 is a glycosylation site (N-linked (GlcNAc...) asparagine). Cu cation-binding residues include histidine 77, histidine 79, and histidine 94. Cysteine 88 and cysteine 177 are oxidised to a cystine. Residues histidine 94, histidine 102, histidine 111, and aspartate 114 each contribute to the Zn(2+) site. Histidine 151 provides a ligand contact to Cu cation.

This sequence belongs to the Cu-Zn superoxide dismutase family. It depends on Cu cation as a cofactor. The cofactor is Zn(2+).

The protein resides in the secreted. It localises to the extracellular space. The enzyme catalyses 2 superoxide + 2 H(+) = H2O2 + O2. In terms of biological role, destroys radicals which are normally produced within the cells and which are toxic to biological systems. This is Extracellular superoxide dismutase [Cu-Zn] (SOD) from Haemonchus contortus (Barber pole worm).